The chain runs to 336 residues: tRNA-dihydrouridine(20/20a) synthase (336 aa).

Residues proline 24 to methionine 26 and glutamine 77 each bind FMN. Cysteine 107 functions as the Proton donor in the catalytic mechanism. FMN is bound by residues lysine 146, histidine 178, asparagine 218–glycine 220, and glycine 240–arginine 241.

Belongs to the Dus family. DusA subfamily. It depends on FMN as a cofactor.

The catalysed reaction is 5,6-dihydrouridine(20) in tRNA + NADP(+) = uridine(20) in tRNA + NADPH + H(+). The enzyme catalyses 5,6-dihydrouridine(20) in tRNA + NAD(+) = uridine(20) in tRNA + NADH + H(+). It catalyses the reaction 5,6-dihydrouridine(20a) in tRNA + NADP(+) = uridine(20a) in tRNA + NADPH + H(+). It carries out the reaction 5,6-dihydrouridine(20a) in tRNA + NAD(+) = uridine(20a) in tRNA + NADH + H(+). Its function is as follows. Catalyzes the synthesis of 5,6-dihydrouridine (D), a modified base found in the D-loop of most tRNAs, via the reduction of the C5-C6 double bond in target uridines. Specifically modifies U20 and U20a in tRNAs. In Pseudomonas putida (strain ATCC 47054 / DSM 6125 / CFBP 8728 / NCIMB 11950 / KT2440), this protein is tRNA-dihydrouridine(20/20a) synthase.